The sequence spans 582 residues: Spermatogenesis-associated protein 7 homolog (582 aa).

2 disordered regions span residues 167 to 192 and 251 to 289; these read LMSG…CDRR and RKDF…EVNI. Composition is skewed to polar residues over residues 169-181 and 262-274; these read SGTQ…SPSR and ETQT…NSEL.

As to quaternary structure, found in a complex with CFAP410, NEK1 and SPATA7. Interacts with NEK1. Interacts with RPGRIP1. Interacts with RPGR. Interacts with NPHP4. Interacts with NPHP1. Interacts with AHI1. Expressed in the retina (at protein level). Expressed in the choroid region and retinal pigment endothelium, within the photoreceptor layer (at protein level).

The protein localises to the cytoplasm. It is found in the cytoskeleton. Its subcellular location is the cilium axoneme. The protein resides in the cilium basal body. It localises to the cell projection. The protein localises to the cilium. It is found in the photoreceptor outer segment. Functionally, involved in the maintenance of both rod and cone photoreceptor cells. Required for photoreceptor-specific localization of proximal connecting cilium (CC) proteins RPGR, AHI1, NPHP1, NPHP4, and RPGRIP1 at the distal CC, a photoreceptor-specific extension of the primary cilium transition zone. Maintenance of protein localization at the photoreceptor-specific distal CC is essential for normal microtubule stability and to prevent photoreceptor degeneration. This is Spermatogenesis-associated protein 7 homolog (Spata7) from Mus musculus (Mouse).